The primary structure comprises 114 residues: Cytochrome b-c1 complex subunit 1, mitochondrial (114 aa).

K31 is subject to N6-acetyllysine.

Belongs to the peptidase M16 family. UQCRC1/QCR1 subfamily. Component of the ubiquinol-cytochrome c oxidoreductase (cytochrome b-c1 complex, complex III, CIII), a multisubunit enzyme composed of 11 subunits. The complex is composed of 3 respiratory subunits cytochrome b, cytochrome c1 and Rieske protein UQCRFS1, 2 core protein subunits UQCRC1/QCR1 and UQCRC2/QCR2, and 6 low-molecular weight protein subunits UQCRH/QCR6, UQCRB/QCR7, UQCRQ/QCR8, UQCR10/QCR9, UQCR11/QCR10 and subunit 9, the cleavage product of Rieske protein UQCRFS1. The complex exists as an obligatory dimer and forms supercomplexes (SCs) in the inner mitochondrial membrane with NADH-ubiquinone oxidoreductase (complex I, CI) and cytochrome c oxidase (complex IV, CIV), resulting in different assemblies (supercomplex SCI(1)III(2)IV(1) and megacomplex MCI(2)III(2)IV(2)). Interacts with UQCC6. Interacts with STMP1.

The protein localises to the mitochondrion inner membrane. In terms of biological role, component of the ubiquinol-cytochrome c oxidoreductase, a multisubunit transmembrane complex that is part of the mitochondrial electron transport chain which drives oxidative phosphorylation. The respiratory chain contains 3 multisubunit complexes succinate dehydrogenase (complex II, CII), ubiquinol-cytochrome c oxidoreductase (cytochrome b-c1 complex, complex III, CIII) and cytochrome c oxidase (complex IV, CIV), that cooperate to transfer electrons derived from NADH and succinate to molecular oxygen, creating an electrochemical gradient over the inner membrane that drives transmembrane transport and the ATP synthase. The cytochrome b-c1 complex catalyzes electron transfer from ubiquinol to cytochrome c, linking this redox reaction to translocation of protons across the mitochondrial inner membrane, with protons being carried across the membrane as hydrogens on the quinol. In the process called Q cycle, 2 protons are consumed from the matrix, 4 protons are released into the intermembrane space and 2 electrons are passed to cytochrome c. The 2 core subunits UQCRC1/QCR1 and UQCRC2/QCR2 are homologous to the 2 mitochondrial-processing peptidase (MPP) subunits beta-MPP and alpha-MPP respectively, and they seem to have preserved their MPP processing properties. May be involved in the in situ processing of UQCRFS1 into the mature Rieske protein and its mitochondrial targeting sequence (MTS)/subunit 9 when incorporated into complex III. Seems to play an important role in the maintenance of proper mitochondrial function in nigral dopaminergic neurons. The sequence is that of Cytochrome b-c1 complex subunit 1, mitochondrial from Mesocricetus auratus (Golden hamster).